Reading from the N-terminus, the 125-residue chain is Phosphoribosyl-AMP cyclohydrolase (125 aa).

D74 contacts Mg(2+). C75 is a binding site for Zn(2+). Positions 76 and 78 each coordinate Mg(2+). Zn(2+) contacts are provided by C92 and C99.

It belongs to the PRA-CH family. In terms of assembly, homodimer. Requires Mg(2+) as cofactor. Zn(2+) serves as cofactor.

It is found in the cytoplasm. The catalysed reaction is 1-(5-phospho-beta-D-ribosyl)-5'-AMP + H2O = 1-(5-phospho-beta-D-ribosyl)-5-[(5-phospho-beta-D-ribosylamino)methylideneamino]imidazole-4-carboxamide. It functions in the pathway amino-acid biosynthesis; L-histidine biosynthesis; L-histidine from 5-phospho-alpha-D-ribose 1-diphosphate: step 3/9. In terms of biological role, catalyzes the hydrolysis of the adenine ring of phosphoribosyl-AMP. The polypeptide is Phosphoribosyl-AMP cyclohydrolase (Geobacter sulfurreducens (strain ATCC 51573 / DSM 12127 / PCA)).